A 497-amino-acid polypeptide reads, in one-letter code: MSPETIGPAAVIVLAAGAGTRMKSRTPKILHEIGGRSMVGHALLAARAINPLKLALVVRHERDRVAEHVTASDPEALIVDQDDVPGTGRAVEVALKALDAEAELTGTVVVTYGDVPLLTGELLGELVATHEAEGNAVTVLTAVLDDATGYGRILRAENGTVTGIREHKDASEAERTIREVNSGIYAFDAAVLRTALEKVTTDNAQGEMYLTDVLGLARDAGGRVAAVVTEDRWQVEGANDRIQLSALAAEHNRRIIESWMRAGVTVVDPATTWIDSTVTLDEDVRLLPNTQLHGSTTVARDAVVGPDTTLTDVNVGEGAKVIRTHGSGSTIGAKASVGPFTYLRPGTVLGETGKIGAFYETKNVTIGRGSKLSHLGYAGDAEIGEDTNIGCGNITANYDGEKKHRTVIGSGVRTGSNTVFVAPVTVGDGAYSGAGAVIRKDVPAGALALSLAAQRNAEGWVAANRPGTASAKLAEAAQELASTSSQFQATIEEGKQA.

Residues 1–241 (MSPETIGPAA…RWQVEGANDR (241 aa)) are pyrophosphorylase. UDP-N-acetyl-alpha-D-glucosamine-binding positions include 14–17 (LAAG), lysine 28, glutamine 81, 86–87 (GT), 112–114 (YGD), glycine 151, glutamate 166, asparagine 181, and asparagine 239. Aspartate 114 contacts Mg(2+). Asparagine 239 serves as a coordination point for Mg(2+). The interval 242-262 (IQLSALAAEHNRRIIESWMRA) is linker. The tract at residues 263-497 (GVTVVDPATT…QATIEEGKQA (235 aa)) is N-acetyltransferase. 2 residues coordinate UDP-N-acetyl-alpha-D-glucosamine: arginine 344 and lysine 362. The Proton acceptor role is filled by histidine 374. UDP-N-acetyl-alpha-D-glucosamine contacts are provided by tyrosine 377 and asparagine 388. Acetyl-CoA is bound by residues 397 to 398 (NY), serine 416, and alanine 434.

It in the N-terminal section; belongs to the N-acetylglucosamine-1-phosphate uridyltransferase family. In the C-terminal section; belongs to the transferase hexapeptide repeat family. Homotrimer. Requires Mg(2+) as cofactor.

The protein localises to the cytoplasm. The catalysed reaction is alpha-D-glucosamine 1-phosphate + acetyl-CoA = N-acetyl-alpha-D-glucosamine 1-phosphate + CoA + H(+). It carries out the reaction N-acetyl-alpha-D-glucosamine 1-phosphate + UTP + H(+) = UDP-N-acetyl-alpha-D-glucosamine + diphosphate. It functions in the pathway nucleotide-sugar biosynthesis; UDP-N-acetyl-alpha-D-glucosamine biosynthesis; N-acetyl-alpha-D-glucosamine 1-phosphate from alpha-D-glucosamine 6-phosphate (route II): step 2/2. The protein operates within nucleotide-sugar biosynthesis; UDP-N-acetyl-alpha-D-glucosamine biosynthesis; UDP-N-acetyl-alpha-D-glucosamine from N-acetyl-alpha-D-glucosamine 1-phosphate: step 1/1. It participates in bacterial outer membrane biogenesis; LPS lipid A biosynthesis. Its function is as follows. Catalyzes the last two sequential reactions in the de novo biosynthetic pathway for UDP-N-acetylglucosamine (UDP-GlcNAc). The C-terminal domain catalyzes the transfer of acetyl group from acetyl coenzyme A to glucosamine-1-phosphate (GlcN-1-P) to produce N-acetylglucosamine-1-phosphate (GlcNAc-1-P), which is converted into UDP-GlcNAc by the transfer of uridine 5-monophosphate (from uridine 5-triphosphate), a reaction catalyzed by the N-terminal domain. The chain is Bifunctional protein GlmU from Paenarthrobacter aurescens (strain TC1).